Here is a 303-residue protein sequence, read N- to C-terminus: uncharacterized protein (303 aa).

Helical transmembrane passes span 102 to 122 (TYLL…VMAI), 132 to 152 (FVLF…FLFF), 184 to 204 (LLYF…SLIY), and 221 to 241 (FILL…FLLF).

It is found in the membrane. This is an uncharacterized protein from Dictyostelium discoideum (Social amoeba).